A 440-amino-acid polypeptide reads, in one-letter code: MMDDKTKNDQQESNEDKDELELFTRNTSKKRRQRKRSKATHFSNQNKDDTSQQADFDEEIYLINKDFKKEQGNEENNDSASSHANDNNIDDSTDSNIENEDYRYNQETDDQNESNGIAVDNEQHQSAPNEQNSDSNDEETVTKKERKSKVTQLKPLTLEEKRKVRRKRQKRIQYSVITILVLLIAVILIYMFSPLSKIAHVNINGNNHVSTSKINKVLGVKNDSRMYTFSKKNAINDLEEDPLIKSVEIHKQLPNTLNVDITENEIIALVKYKGKYLPLLENGKLLKGSNDVKINDAPVMDGFKGTKEDDMIKALSEMTPEVRRYIAEVTYAPSKNKQSRIELFTTDGLQVIGDISTISKKMKYYPQMSQSLARDSSGKLKTRGYIDLSVGASFIPYRGNTSTQSESDKNVTKSSQEENQAKEELQSVLNKINKQSSKNN.

The span at 1–10 shows a compositional bias: basic and acidic residues; it reads MMDDKTKNDQ. 2 disordered regions span residues 1-97 and 123-154; these read MMDD…DSNI and QHQS…TQLK. Residues 1–174 lie on the Cytoplasmic side of the membrane; the sequence is MMDDKTKNDQ…RRKRQKRIQY (174 aa). A compositionally biased stretch (acidic residues) spans 12–21; it reads ESNEDKDELE. Positions 27 to 39 are enriched in basic residues; that stretch reads TSKKRRQRKRSKA. Residues 78 to 87 show a composition bias toward low complexity; it reads DSASSHANDN. Residues 88 to 97 are compositionally biased toward acidic residues; that stretch reads NIDDSTDSNI. Over residues 124–134 the composition is skewed to polar residues; that stretch reads HQSAPNEQNSD. The chain crosses the membrane as a helical span at residues 175–195; the sequence is SVITILVLLIAVILIYMFSPL. Residues 196-264 enclose the POTRA domain; that stretch reads SKIAHVNING…NTLNVDITEN (69 aa). Residues 196-440 lie on the Extracellular side of the membrane; the sequence is SKIAHVNING…KINKQSSKNN (245 aa). The interval 397 to 440 is disordered; the sequence is YRGNTSTQSESDKNVTKSSQEENQAKEELQSVLNKINKQSSKNN. Positions 406–425 are enriched in basic and acidic residues; sequence ESDKNVTKSSQEENQAKEEL. The span at 427–440 shows a compositional bias: polar residues; the sequence is SVLNKINKQSSKNN.

Belongs to the FtsQ/DivIB family. DivIB subfamily.

It is found in the cell membrane. In terms of biological role, cell division protein that may be involved in stabilizing or promoting the assembly of the division complex. This is Cell division protein DivIB from Staphylococcus aureus (strain MRSA252).